The following is a 726-amino-acid chain: Fatty acid oxidation complex subunit alpha (726 aa).

The enoyl-CoA hydratase/isomerase stretch occupies residues 1 to 189 (MIYQGENLSV…KIGMVDGIVS (189 aa)). Substrate is bound at residue Asp296. Residues 311 to 726 (EPVKNAAVLG…PKSSVSSPSV (416 aa)) form a 3-hydroxyacyl-CoA dehydrogenase region. NAD(+) contacts are provided by residues Met324, Asp343, 400–402 (VVE), Lys407, and Ser429. His450 acts as the For 3-hydroxyacyl-CoA dehydrogenase activity in catalysis. Asn453 is a binding site for NAD(+). Substrate contacts are provided by Asn500 and Tyr660.

The protein in the N-terminal section; belongs to the enoyl-CoA hydratase/isomerase family. It in the C-terminal section; belongs to the 3-hydroxyacyl-CoA dehydrogenase family. Heterotetramer of two alpha chains (FadB) and two beta chains (FadA).

The enzyme catalyses a (3S)-3-hydroxyacyl-CoA + NAD(+) = a 3-oxoacyl-CoA + NADH + H(+). The catalysed reaction is a (3S)-3-hydroxyacyl-CoA = a (2E)-enoyl-CoA + H2O. It carries out the reaction a 4-saturated-(3S)-3-hydroxyacyl-CoA = a (3E)-enoyl-CoA + H2O. It catalyses the reaction (3S)-3-hydroxybutanoyl-CoA = (3R)-3-hydroxybutanoyl-CoA. The enzyme catalyses a (3Z)-enoyl-CoA = a 4-saturated (2E)-enoyl-CoA. The catalysed reaction is a (3E)-enoyl-CoA = a 4-saturated (2E)-enoyl-CoA. The protein operates within lipid metabolism; fatty acid beta-oxidation. Functionally, involved in the aerobic and anaerobic degradation of long-chain fatty acids via beta-oxidation cycle. Catalyzes the formation of 3-oxoacyl-CoA from enoyl-CoA via L-3-hydroxyacyl-CoA. It can also use D-3-hydroxyacyl-CoA and cis-3-enoyl-CoA as substrate. This chain is Fatty acid oxidation complex subunit alpha, found in Aliivibrio salmonicida (strain LFI1238) (Vibrio salmonicida (strain LFI1238)).